Consider the following 335-residue polypeptide: Pyridoxal 5'-phosphate synthase subunit PdxS (335 aa).

D59 is a D-ribose 5-phosphate binding site. Residue K116 is the Schiff-base intermediate with D-ribose 5-phosphate of the active site. Residue G188 coordinates D-ribose 5-phosphate. Position 200 (K200) interacts with D-glyceraldehyde 3-phosphate. D-ribose 5-phosphate is bound by residues G253 and 274-275 (GS).

Belongs to the PdxS/SNZ family. As to quaternary structure, in the presence of PdxT, forms a dodecamer of heterodimers.

It carries out the reaction aldehydo-D-ribose 5-phosphate + D-glyceraldehyde 3-phosphate + L-glutamine = pyridoxal 5'-phosphate + L-glutamate + phosphate + 3 H2O + H(+). Its pathway is cofactor biosynthesis; pyridoxal 5'-phosphate biosynthesis. Catalyzes the formation of pyridoxal 5'-phosphate from ribose 5-phosphate (RBP), glyceraldehyde 3-phosphate (G3P) and ammonia. The ammonia is provided by the PdxT subunit. Can also use ribulose 5-phosphate and dihydroxyacetone phosphate as substrates, resulting from enzyme-catalyzed isomerization of RBP and G3P, respectively. The polypeptide is Pyridoxal 5'-phosphate synthase subunit PdxS (Desulfurococcus amylolyticus (strain DSM 18924 / JCM 16383 / VKM B-2413 / 1221n) (Desulfurococcus kamchatkensis)).